We begin with the raw amino-acid sequence, 105 residues long: Nitrogen fixation nifHD region glnB-like protein 1 (105 aa).

It belongs to the P(II) protein family.

In terms of biological role, could be involved in the regulation of nitrogen fixation. This chain is Nitrogen fixation nifHD region glnB-like protein 1 (glnBI), found in Methanococcus maripaludis (Methanococcus deltae).